Reading from the N-terminus, the 347-residue chain is Dihydroorotase (347 aa).

Positions 14 and 16 each coordinate Zn(2+). Substrate is bound by residues 16–18 (HLR) and Asn42. Zn(2+)-binding residues include Lys100, His137, and His175. The residue at position 100 (Lys100) is an N6-carboxylysine. Substrate is bound at residue His137. Leu220 contacts substrate. Residue Asp248 coordinates Zn(2+). Asp248 is a catalytic residue. The substrate site is built by His252 and Ala264.

It belongs to the metallo-dependent hydrolases superfamily. DHOase family. Class II DHOase subfamily. Homodimer. Zn(2+) is required as a cofactor.

The enzyme catalyses (S)-dihydroorotate + H2O = N-carbamoyl-L-aspartate + H(+). The protein operates within pyrimidine metabolism; UMP biosynthesis via de novo pathway; (S)-dihydroorotate from bicarbonate: step 3/3. Functionally, catalyzes the reversible cyclization of carbamoyl aspartate to dihydroorotate. The polypeptide is Dihydroorotase (Pseudomonas syringae pv. tomato (strain ATCC BAA-871 / DC3000)).